Consider the following 330-residue polypeptide: tRNA U34 carboxymethyltransferase (330 aa).

Carboxy-S-adenosyl-L-methionine is bound by residues lysine 91, tryptophan 105, lysine 110, glycine 130, 152–154, 181–182, methionine 196, tyrosine 200, and arginine 315; these read DPS and IE.

The protein belongs to the class I-like SAM-binding methyltransferase superfamily. CmoB family. In terms of assembly, homotetramer.

The catalysed reaction is carboxy-S-adenosyl-L-methionine + 5-hydroxyuridine(34) in tRNA = 5-carboxymethoxyuridine(34) in tRNA + S-adenosyl-L-homocysteine + H(+). Functionally, catalyzes carboxymethyl transfer from carboxy-S-adenosyl-L-methionine (Cx-SAM) to 5-hydroxyuridine (ho5U) to form 5-carboxymethoxyuridine (cmo5U) at position 34 in tRNAs. The sequence is that of tRNA U34 carboxymethyltransferase from Shewanella oneidensis (strain ATCC 700550 / JCM 31522 / CIP 106686 / LMG 19005 / NCIMB 14063 / MR-1).